The following is a 1143-amino-acid chain: MTTSPIRVRIRTRIQISFIFLLTHLSQSSSSDQSSLKTDSLSLLSFKTMIQDDPNNILSNWSPRKSPCQFSGVTCLGGRVTEINLSGSGLSGIVSFNAFTSLDSLSVLKLSENFFVLNSTSLLLLPLTLTHLELSSSGLIGTLPENFFSKYSNLISITLSYNNFTGKLPNDLFLSSKKLQTLDLSYNNITGPISGLTIPLSSCVSMTYLDFSGNSISGYISDSLINCTNLKSLNLSYNNFDGQIPKSFGELKLLQSLDLSHNRLTGWIPPEIGDTCRSLQNLRLSYNNFTGVIPESLSSCSWLQSLDLSNNNISGPFPNTILRSFGSLQILLLSNNLISGDFPTSISACKSLRIADFSSNRFSGVIPPDLCPGAASLEELRLPDNLVTGEIPPAISQCSELRTIDLSLNYLNGTIPPEIGNLQKLEQFIAWYNNIAGEIPPEIGKLQNLKDLILNNNQLTGEIPPEFFNCSNIEWVSFTSNRLTGEVPKDFGILSRLAVLQLGNNNFTGEIPPELGKCTTLVWLDLNTNHLTGEIPPRLGRQPGSKALSGLLSGNTMAFVRNVGNSCKGVGGLVEFSGIRPERLLQIPSLKSCDFTRMYSGPILSLFTRYQTIEYLDLSYNQLRGKIPDEIGEMIALQVLELSHNQLSGEIPFTIGQLKNLGVFDASDNRLQGQIPESFSNLSFLVQIDLSNNELTGPIPQRGQLSTLPATQYANNPGLCGVPLPECKNGNNQLPAGTEEGKRAKHGTRAASWANSIVLGVLISAASVCILIVWAIAVRARRRDADDAKMLHSLQAVNSATTWKIEKEKEPLSINVATFQRQLRKLKFSQLIEATNGFSAASMIGHGGFGEVFKATLKDGSSVAIKKLIRLSCQGDREFMAEMETLGKIKHRNLVPLLGYCKIGEERLLVYEFMQYGSLEEVLHGPRTGEKRRILGWEERKKIAKGAAKGLCFLHHNCIPHIIHRDMKSSNVLLDQDMEARVSDFGMARLISALDTHLSVSTLAGTPGYVPPEYYQSFRCTAKGDVYSIGVVMLEILSGKRPTDKEEFGDTNLVGWSKMKAREGKHMEVIDEDLLKEGSSESLNEKEGFEGGVIVKEMLRYLEIALRCVDDFPSKRPNMLQVVASLRELRGSENNSHSHSNSL.

The first 31 residues, 1–31 (MTTSPIRVRIRTRIQISFIFLLTHLSQSSSS), serve as a signal peptide directing secretion. The Extracellular portion of the chain corresponds to 32 to 756 (DQSSLKTDSL…GTRAASWANS (725 aa)). A Cys pair 1 motif is present at residues 68-75 (CQFSGVTC). LRR repeat units lie at residues 77 to 101 (GGRV…AFTS), 102 to 125 (LDSL…LLLL), 126 to 150 (PLTL…FFSK), 151 to 175 (YSNL…LFLS), 177 to 200 (KKLQ…TIPL), 203 to 227 (CVSM…LINC), 228 to 250 (TNLK…SFGE), 251 to 275 (LKLL…IGDT), 277 to 299 (RSLQ…SLSS), 300 to 324 (CSWL…ILRS), 326 to 349 (GSLQ…ISAC), 351 to 373 (SLRI…LCPG), 374 to 398 (AASL…ISQC), 399 to 422 (SELR…IGNL), 424 to 446 (KLEQ…IGKL), 447 to 470 (QNLK…FFNC), 472 to 493 (NIEW…DFGI), 494 to 518 (LSRL…LGKC), 520 to 542 (TLVW…LGRQ), 570 to 594 (VGGL…KSCD), 610 to 634 (YQTI…IGEM), 635 to 660 (IALQ…QLKN), 662 to 681 (GVFD…SFSN), and 682 to 707 (LSFL…QLST). N-linked (GlcNAc...) asparagine glycosylation is found at Asn-84 and Asn-118. Asn-163, Asn-188, Asn-226, and Asn-234 each carry an N-linked (GlcNAc...) asparagine glycan. N-linked (GlcNAc...) asparagine glycans are attached at residues Asn-288 and Asn-312. The N-linked (GlcNAc...) asparagine glycan is linked to Asn-412. Asn-469 carries an N-linked (GlcNAc...) asparagine glycan. N-linked (GlcNAc...) asparagine glycosylation occurs at Asn-506. Asn-681 carries an N-linked (GlcNAc...) asparagine glycan. A Cys pair 2 motif is present at residues 720 to 727 (CGVPLPEC). The chain crosses the membrane as a helical span at residues 757-777 (IVLGVLISAASVCILIVWAIA). The Cytoplasmic portion of the chain corresponds to 778-1143 (VRARRRDADD…NNSHSHSNSL (366 aa)). Thr-835 bears the Phosphothreonine mark. A Protein kinase domain is found at 838–1129 (FSAASMIGHG…LQVVASLREL (292 aa)). ATP contacts are provided by residues 844-852 (IGHGGFGEV) and Lys-866. A Phosphotyrosine modification is found at Tyr-911. Asp-966 functions as the Proton acceptor in the catalytic mechanism. Ser-1001 carries the phosphoserine modification. Tyr-1009 carries the post-translational modification Phosphotyrosine.

Belongs to the protein kinase superfamily. Ser/Thr protein kinase family. Interacts with TTL3. In terms of tissue distribution, expressed in provascular and procambial sites throughout plant development. Expressed throughout globe- to heart-staged embryos. Then, it is restricted to procambial cells by the late torpedo stage, and this pattern persists throughout the duration of embryo development. After germination, it is expressed not only in procambial cells throughout the plant but also in all lateral organ primordia before the onset of vascularization.

The protein resides in the cell membrane. It catalyses the reaction L-seryl-[protein] + ATP = O-phospho-L-seryl-[protein] + ADP + H(+). The catalysed reaction is L-threonyl-[protein] + ATP = O-phospho-L-threonyl-[protein] + ADP + H(+). Receptor with a serine/threonine-protein kinase activity, which may transduce extracellular spatial and temporal signals into downstream cell differentiation responses in provascular and procambial cells. In contrast to BRI1, BRL1 and BRL3, it does not bind brassinolide. This Arabidopsis thaliana (Mouse-ear cress) protein is Serine/threonine-protein kinase BRI1-like 2.